The chain runs to 143 residues: Large ribosomal subunit protein uL13 (143 aa).

Belongs to the universal ribosomal protein uL13 family. In terms of assembly, part of the 50S ribosomal subunit.

In terms of biological role, this protein is one of the early assembly proteins of the 50S ribosomal subunit, although it is not seen to bind rRNA by itself. It is important during the early stages of 50S assembly. This Prochlorococcus marinus subsp. pastoris (strain CCMP1986 / NIES-2087 / MED4) protein is Large ribosomal subunit protein uL13.